We begin with the raw amino-acid sequence, 374 residues long: Histidinol-phosphate aminotransferase 2 (374 aa).

At lysine 227 the chain carries N6-(pyridoxal phosphate)lysine.

Belongs to the class-II pyridoxal-phosphate-dependent aminotransferase family. Histidinol-phosphate aminotransferase subfamily. As to quaternary structure, homodimer. Pyridoxal 5'-phosphate is required as a cofactor.

It catalyses the reaction L-histidinol phosphate + 2-oxoglutarate = 3-(imidazol-4-yl)-2-oxopropyl phosphate + L-glutamate. The protein operates within amino-acid biosynthesis; L-histidine biosynthesis; L-histidine from 5-phospho-alpha-D-ribose 1-diphosphate: step 7/9. This is Histidinol-phosphate aminotransferase 2 (hisC2) from Ralstonia nicotianae (strain ATCC BAA-1114 / GMI1000) (Ralstonia solanacearum).